A 113-amino-acid polypeptide reads, in one-letter code: uncharacterized protein (113 aa).

Disordered regions lie at residues 1 to 22 (MGEHAIKRHMRQRKPTKHPLAQ) and 90 to 113 (DGRHTTESSFEHSSPSRSPQSDDL). Residues 90–99 (DGRHTTESSF) are compositionally biased toward basic and acidic residues. Residues 100 to 113 (EHSSPSRSPQSDDL) show a composition bias toward low complexity.

This is an uncharacterized protein from Mycobacterium tuberculosis (strain ATCC 25618 / H37Rv).